A 1099-amino-acid chain; its full sequence is Carbamoyl phosphate synthase large chain (1099 aa).

Residues 1–402 (MPKREDIKRI…ALGKALRSLE (402 aa)) form a carboxyphosphate synthetic domain region. ATP contacts are provided by Arg129, Arg169, Gly175, Gly176, Glu208, Val210, Glu215, Gly241, Ile242, His243, Gln285, and Glu299. The ATP-grasp 1 domain maps to 133 to 328 (KETMEKAGLE…IAKVAALLAV (196 aa)). Gln285, Glu299, and Asn301 together coordinate Mg(2+). 3 residues coordinate Mn(2+): Gln285, Glu299, and Asn301. The segment at 403–541 (LDAAPKLDLE…STYNGVENEA (139 aa)) is oligomerization domain. A carbamoyl phosphate synthetic domain region spans residues 542 to 944 (VPSDREKIMI…AFAKAQIAAG (403 aa)). In terms of domain architecture, ATP-grasp 2 spans 666–857 (AKLLKQIGLK…VARIAAKIMV (192 aa)). ATP contacts are provided by Arg702, Lys741, Leu743, Glu748, Gly773, Val774, His775, Ser776, Gln816, and Glu828. Residues Gln816, Glu828, and Asn830 each contribute to the Mg(2+) site. Mn(2+) contacts are provided by Gln816, Glu828, and Asn830. Residues 945–1099 (NPLPTTGAIL…VRRLTDTWKM (155 aa)) enclose the MGS-like domain. The interval 945–1099 (NPLPTTGAIL…VRRLTDTWKM (155 aa)) is allosteric domain.

It belongs to the CarB family. Composed of two chains; the small (or glutamine) chain promotes the hydrolysis of glutamine to ammonia, which is used by the large (or ammonia) chain to synthesize carbamoyl phosphate. Tetramer of heterodimers (alpha,beta)4. Mg(2+) is required as a cofactor. It depends on Mn(2+) as a cofactor.

It catalyses the reaction hydrogencarbonate + L-glutamine + 2 ATP + H2O = carbamoyl phosphate + L-glutamate + 2 ADP + phosphate + 2 H(+). The catalysed reaction is hydrogencarbonate + NH4(+) + 2 ATP = carbamoyl phosphate + 2 ADP + phosphate + 2 H(+). It participates in amino-acid biosynthesis; L-arginine biosynthesis; carbamoyl phosphate from bicarbonate: step 1/1. The protein operates within pyrimidine metabolism; UMP biosynthesis via de novo pathway; (S)-dihydroorotate from bicarbonate: step 1/3. Its function is as follows. Large subunit of the glutamine-dependent carbamoyl phosphate synthetase (CPSase). CPSase catalyzes the formation of carbamoyl phosphate from the ammonia moiety of glutamine, carbonate, and phosphate donated by ATP, constituting the first step of 2 biosynthetic pathways, one leading to arginine and/or urea and the other to pyrimidine nucleotides. The large subunit (synthetase) binds the substrates ammonia (free or transferred from glutamine from the small subunit), hydrogencarbonate and ATP and carries out an ATP-coupled ligase reaction, activating hydrogencarbonate by forming carboxy phosphate which reacts with ammonia to form carbamoyl phosphate. The sequence is that of Carbamoyl phosphate synthase large chain from Thermotoga sp. (strain RQ2).